Reading from the N-terminus, the 341-residue chain is Ribosomal RNA small subunit methyltransferase H (341 aa).

S-adenosyl-L-methionine is bound by residues Gly-47–Tyr-49, Asp-64, Phe-91, Asp-109, and Gln-116.

The protein belongs to the methyltransferase superfamily. RsmH family.

Its subcellular location is the cytoplasm. The catalysed reaction is cytidine(1402) in 16S rRNA + S-adenosyl-L-methionine = N(4)-methylcytidine(1402) in 16S rRNA + S-adenosyl-L-homocysteine + H(+). Functionally, specifically methylates the N4 position of cytidine in position 1402 (C1402) of 16S rRNA. This Agrobacterium fabrum (strain C58 / ATCC 33970) (Agrobacterium tumefaciens (strain C58)) protein is Ribosomal RNA small subunit methyltransferase H.